We begin with the raw amino-acid sequence, 203 residues long: Glycerol-3-phosphate acyltransferase (203 aa).

5 helical membrane passes run Leu-10–Met-30, Leu-60–Ala-80, Ala-88–Phe-108, Leu-118–Ile-138, and Phe-162–Leu-182.

This sequence belongs to the PlsY family. In terms of assembly, probably interacts with PlsX.

It is found in the cell inner membrane. It catalyses the reaction an acyl phosphate + sn-glycerol 3-phosphate = a 1-acyl-sn-glycero-3-phosphate + phosphate. The protein operates within lipid metabolism; phospholipid metabolism. In terms of biological role, catalyzes the transfer of an acyl group from acyl-phosphate (acyl-PO(4)) to glycerol-3-phosphate (G3P) to form lysophosphatidic acid (LPA). This enzyme utilizes acyl-phosphate as fatty acyl donor, but not acyl-CoA or acyl-ACP. This is Glycerol-3-phosphate acyltransferase from Jannaschia sp. (strain CCS1).